A 249-amino-acid chain; its full sequence is Exosome complex component Rrp41 (249 aa).

It belongs to the RNase PH family. Rrp41 subfamily. Component of the archaeal exosome complex. Forms a hexameric ring-like arrangement composed of 3 Rrp41-Rrp42 heterodimers. The hexameric ring associates with a trimer of Rrp4 and/or Csl4 subunits.

The protein localises to the cytoplasm. Functionally, catalytic component of the exosome, which is a complex involved in RNA degradation. Has 3'-&gt;5' exoribonuclease activity. Can also synthesize heteromeric RNA-tails. This chain is Exosome complex component Rrp41, found in Pyrococcus horikoshii (strain ATCC 700860 / DSM 12428 / JCM 9974 / NBRC 100139 / OT-3).